The chain runs to 252 residues: Acyltransferase PGAP2 (252 aa).

Residues 1–22 lie on the Cytoplasmic side of the membrane; sequence MVPVGPERGANSLFSLRFTTFA. The helical transmembrane segment at 23-43 threads the bilayer; that stretch reads VGTVSLPLFAFLFCIVWSLLF. Topologically, residues 44 to 77 are lumenal; that stretch reads NFSETTATHCHVPNYLPSVSAAIGGETPQRYIWR. The helical transmembrane segment at 78–98 threads the bilayer; that stretch reads LCIGLHSAPRFLVGVAYLHYY. Over 99–111 the chain is Cytoplasmic; that stretch reads QGTPCSSPAYPRL. Residues 112–132 form a helical membrane-spanning segment; sequence CHLNFLLNCCEIFFLILLTYV. Residues 133-142 are Lumenal-facing; that stretch reads SSSENYEVHK. Residues 143–163 form a helical membrane-spanning segment; sequence LGFMAFMLFSVGYMFVTCSLW. Residues 164-184 are Cytoplasmic-facing; sequence RVARKGSGSLEERTSYAWKKR. The helical transmembrane segment at 185-205 threads the bilayer; it reads LFGFYLLMFLSSILVYIWHNM. The Lumenal segment spans residues 206 to 208; the sequence is YCE. A helical membrane pass occupies residues 209–229; it reads AGVYTVFALLEYLVVLSNMGF. At 230–252 the chain is on the cytoplasmic side; the sequence is HMTAWWDFGNKELMICSPGDKRI.

This sequence belongs to the PGAP2 family.

The protein resides in the golgi apparatus membrane. In terms of biological role, involved in the fatty acid remodeling steps of GPI-anchor maturation where the unsaturated acyl chain at sn-2 of inositol phosphate is replaced by a saturated stearoyl chain. May catalyze the second step of the fatty acid remodeling, by reacylating a lyso-GPI intermediate at sn-2 of inositol phosphate by a saturated chain. The fatty acid remodeling steps is critical for the integration of GPI-APs into lipid rafts. In Xenopus tropicalis (Western clawed frog), this protein is Acyltransferase PGAP2.